We begin with the raw amino-acid sequence, 199 residues long: Dephospho-CoA kinase (199 aa).

Residues 3 to 199 (VLGLTGSIGM…AAARMPRRRP (197 aa)) enclose the DPCK domain. Residue 11–16 (GMGKST) coordinates ATP.

Belongs to the CoaE family.

Its subcellular location is the cytoplasm. The enzyme catalyses 3'-dephospho-CoA + ATP = ADP + CoA + H(+). Its pathway is cofactor biosynthesis; coenzyme A biosynthesis; CoA from (R)-pantothenate: step 5/5. In terms of biological role, catalyzes the phosphorylation of the 3'-hydroxyl group of dephosphocoenzyme A to form coenzyme A. The sequence is that of Dephospho-CoA kinase from Rhodopseudomonas palustris (strain HaA2).